A 271-amino-acid chain; its full sequence is Formamidopyrimidine-DNA glycosylase (271 aa).

Proline 2 functions as the Schiff-base intermediate with DNA in the catalytic mechanism. The Proton donor role is filled by glutamate 3. Lysine 57 serves as the catalytic Proton donor; for beta-elimination activity. Histidine 90, arginine 109, and lysine 151 together coordinate DNA. The FPG-type zinc finger occupies 236–270 (HVYGRGGETCTECGHLLSEIRLGQRTTVFCSLCQT). Arginine 260 functions as the Proton donor; for delta-elimination activity in the catalytic mechanism.

It belongs to the FPG family. As to quaternary structure, monomer. It depends on Zn(2+) as a cofactor.

The catalysed reaction is Hydrolysis of DNA containing ring-opened 7-methylguanine residues, releasing 2,6-diamino-4-hydroxy-5-(N-methyl)formamidopyrimidine.. It carries out the reaction 2'-deoxyribonucleotide-(2'-deoxyribose 5'-phosphate)-2'-deoxyribonucleotide-DNA = a 3'-end 2'-deoxyribonucleotide-(2,3-dehydro-2,3-deoxyribose 5'-phosphate)-DNA + a 5'-end 5'-phospho-2'-deoxyribonucleoside-DNA + H(+). Its function is as follows. Involved in base excision repair of DNA damaged by oxidation or by mutagenic agents. Acts as a DNA glycosylase that recognizes and removes damaged bases. Has a preference for oxidized purines, such as 7,8-dihydro-8-oxoguanine (8-oxoG). Has AP (apurinic/apyrimidinic) lyase activity and introduces nicks in the DNA strand. Cleaves the DNA backbone by beta-delta elimination to generate a single-strand break at the site of the removed base with both 3'- and 5'-phosphates. In Shewanella amazonensis (strain ATCC BAA-1098 / SB2B), this protein is Formamidopyrimidine-DNA glycosylase.